The sequence spans 228 residues: 5'-methylthioadenosine/S-adenosylhomocysteine nucleosidase (228 aa).

Glutamate 11 functions as the Proton acceptor in the catalytic mechanism. Substrate-binding positions include glycine 77, isoleucine 151, and 172–173; that span reads ME. Catalysis depends on aspartate 196, which acts as the Proton donor.

This sequence belongs to the PNP/UDP phosphorylase family. MtnN subfamily.

The catalysed reaction is S-adenosyl-L-homocysteine + H2O = S-(5-deoxy-D-ribos-5-yl)-L-homocysteine + adenine. It catalyses the reaction S-methyl-5'-thioadenosine + H2O = 5-(methylsulfanyl)-D-ribose + adenine. It carries out the reaction 5'-deoxyadenosine + H2O = 5-deoxy-D-ribose + adenine. It participates in amino-acid biosynthesis; L-methionine biosynthesis via salvage pathway; S-methyl-5-thio-alpha-D-ribose 1-phosphate from S-methyl-5'-thioadenosine (hydrolase route): step 1/2. Functionally, catalyzes the irreversible cleavage of the glycosidic bond in both 5'-methylthioadenosine (MTA) and S-adenosylhomocysteine (SAH/AdoHcy) to adenine and the corresponding thioribose, 5'-methylthioribose and S-ribosylhomocysteine, respectively. Also cleaves 5'-deoxyadenosine, a toxic by-product of radical S-adenosylmethionine (SAM) enzymes, into 5-deoxyribose and adenine. This chain is 5'-methylthioadenosine/S-adenosylhomocysteine nucleosidase, found in Staphylococcus saprophyticus subsp. saprophyticus (strain ATCC 15305 / DSM 20229 / NCIMB 8711 / NCTC 7292 / S-41).